The chain runs to 342 residues: Deoxyguanosinetriphosphate triphosphohydrolase-like protein (342 aa).

In terms of domain architecture, HD spans 75–190 (RLVHTLEVSQ…VRFADKIAYV (116 aa)).

The protein belongs to the dGTPase family. Type 2 subfamily.

The chain is Deoxyguanosinetriphosphate triphosphohydrolase-like protein from Clostridium perfringens (strain SM101 / Type A).